Here is a 125-residue protein sequence, read N- to C-terminus: Probable 4-amino-4-deoxy-L-arabinose-phosphoundecaprenol flippase subunit ArnF (125 aa).

The Cytoplasmic segment spans residues 1 to 2 (MG). Residues 3 to 23 (VMWGLISVAIASLAQLSLGFA) form a helical membrane-spanning segment. Topologically, residues 24–33 (MMRLPSIAHP) are periplasmic. Residues 34-54 (LAFISGLGAFNAATLALFAGL) form a helical membrane-spanning segment. Residues 55-76 (AGYLVSVFCWQKTLHTLALSKA) lie on the Cytoplasmic side of the membrane. A helical transmembrane segment spans residues 77 to 97 (YALLSLSYVLVWVASMLLPGL). Over 98 to 100 (QGA) the chain is Periplasmic. Residues 101 to 121 (FSLKAMLGVLCIMAGVMLIFL) form a helical membrane-spanning segment. At 122-125 (PARS) the chain is on the cytoplasmic side.

This sequence belongs to the ArnF family. In terms of assembly, heterodimer of ArnE and ArnF.

It localises to the cell inner membrane. Its pathway is bacterial outer membrane biogenesis; lipopolysaccharide biosynthesis. Functionally, translocates 4-amino-4-deoxy-L-arabinose-phosphoundecaprenol (alpha-L-Ara4N-phosphoundecaprenol) from the cytoplasmic to the periplasmic side of the inner membrane. The protein is Probable 4-amino-4-deoxy-L-arabinose-phosphoundecaprenol flippase subunit ArnF of Salmonella choleraesuis (strain SC-B67).